Here is a 290-residue protein sequence, read N- to C-terminus: ATP synthase gamma chain (290 aa).

It belongs to the ATPase gamma chain family. In terms of assembly, F-type ATPases have 2 components, CF(1) - the catalytic core - and CF(0) - the membrane proton channel. CF(1) has five subunits: alpha(3), beta(3), gamma(1), delta(1), epsilon(1). CF(0) has three main subunits: a, b and c.

The protein localises to the cell inner membrane. Produces ATP from ADP in the presence of a proton gradient across the membrane. The gamma chain is believed to be important in regulating ATPase activity and the flow of protons through the CF(0) complex. This is ATP synthase gamma chain from Paracoccus denitrificans (strain Pd 1222).